Consider the following 308-residue polypeptide: Protoheme IX farnesyltransferase (308 aa).

The next 8 helical transmembrane spans lie at 20–40, 50–70, 102–122, 124–144, 149–169, 170–190, 227–249, and 288–308; these read LLAYLALTKPRVIELLLVTAI, AIHPLLMLNTLVGGMMAAAGA, NALALGLTLTVISFFWLWCAT, LLAGVLALVTVAFYVFVYTLW, TSQNVVWGGAAGCMPVMIGWS, AITGTIAWPALAMFAIIFFWT, LIYTWLTVAATLVLALATSWLYG, and YLAVVFCALAVDSVIALPTLH.

The protein belongs to the UbiA prenyltransferase family. Protoheme IX farnesyltransferase subfamily.

It is found in the cell membrane. It carries out the reaction heme b + (2E,6E)-farnesyl diphosphate + H2O = Fe(II)-heme o + diphosphate. It functions in the pathway porphyrin-containing compound metabolism; heme O biosynthesis; heme O from protoheme: step 1/1. Functionally, converts heme B (protoheme IX) to heme O by substitution of the vinyl group on carbon 2 of heme B porphyrin ring with a hydroxyethyl farnesyl side group. This Mycobacterium tuberculosis (strain ATCC 25618 / H37Rv) protein is Protoheme IX farnesyltransferase.